The primary structure comprises 397 residues: Protein-glutamate methylesterase/protein-glutamine glutaminase of group 2 operon (397 aa).

The Response regulatory domain maps to 21 to 139 (RVMIVDDSVV…EASAADTFHH (119 aa)). D72 is subject to 4-aspartylphosphate. The CheB-type methylesterase domain occupies 199-388 (PFSTLAPKVL…LPLNQIGAKV (190 aa)). Catalysis depends on residues S213, H241, and D337.

It belongs to the CheB family. Post-translationally, phosphorylated by CheA. Phosphorylation of the N-terminal regulatory domain activates the methylesterase activity.

The protein localises to the cytoplasm. It catalyses the reaction [protein]-L-glutamate 5-O-methyl ester + H2O = L-glutamyl-[protein] + methanol + H(+). The enzyme catalyses L-glutaminyl-[protein] + H2O = L-glutamyl-[protein] + NH4(+). Functionally, involved in chemotaxis. Part of a chemotaxis signal transduction system that modulates chemotaxis in response to various stimuli. Catalyzes the demethylation of specific methylglutamate residues introduced into the chemoreceptors (methyl-accepting chemotaxis proteins or MCP) by CheR. Also mediates the irreversible deamidation of specific glutamine residues to glutamic acid. The protein is Protein-glutamate methylesterase/protein-glutamine glutaminase of group 2 operon of Bradyrhizobium diazoefficiens (strain JCM 10833 / BCRC 13528 / IAM 13628 / NBRC 14792 / USDA 110).